Consider the following 217-residue polypeptide: Uridine kinase (217 aa).

17 to 24 (GASASGKS) serves as a coordination point for ATP.

It belongs to the uridine kinase family.

It is found in the cytoplasm. The enzyme catalyses uridine + ATP = UMP + ADP + H(+). It carries out the reaction cytidine + ATP = CMP + ADP + H(+). The protein operates within pyrimidine metabolism; CTP biosynthesis via salvage pathway; CTP from cytidine: step 1/3. It participates in pyrimidine metabolism; UMP biosynthesis via salvage pathway; UMP from uridine: step 1/1. In Haemophilus ducreyi (strain 35000HP / ATCC 700724), this protein is Uridine kinase.